The sequence spans 118 residues: Ribonuclease P protein component (118 aa).

It belongs to the RnpA family. Consists of a catalytic RNA component (M1 or rnpB) and a protein subunit.

The catalysed reaction is Endonucleolytic cleavage of RNA, removing 5'-extranucleotides from tRNA precursor.. RNaseP catalyzes the removal of the 5'-leader sequence from pre-tRNA to produce the mature 5'-terminus. It can also cleave other RNA substrates such as 4.5S RNA. The protein component plays an auxiliary but essential role in vivo by binding to the 5'-leader sequence and broadening the substrate specificity of the ribozyme. This chain is Ribonuclease P protein component, found in Ureaplasma urealyticum serovar 10 (strain ATCC 33699 / Western).